We begin with the raw amino-acid sequence, 180 residues long: O-acetyl-ADP-ribose deacetylase (180 aa).

The Macro domain occupies methionine 1–glycine 175. Substrate is bound by residues aspartate 11 to isoleucine 12, asparagine 25, glycine 33 to aspartate 35, and serine 122 to tyrosine 126. Aspartate 35 functions as the Proton acceptor in the catalytic mechanism.

It belongs to the MacroD-type family. YmdB subfamily. In terms of assembly, homodimer. Interacts with RNase III.

The catalysed reaction is 3''-O-acetyl-ADP-D-ribose + H2O = ADP-D-ribose + acetate + H(+). It catalyses the reaction 2''-O-acetyl-ADP-D-ribose + H2O = ADP-D-ribose + acetate + H(+). Deacetylates O-acetyl-ADP ribose to yield ADP-ribose and free acetate. Down-regulates ribonuclease 3 (RNase III) activity. Acts by interacting directly with the region of the ribonuclease that is required for dimerization/activation. The sequence is that of O-acetyl-ADP-ribose deacetylase from Enterobacter sp. (strain 638).